The following is a 118-amino-acid chain: Large ribosomal subunit protein bL17 (118 aa).

Belongs to the bacterial ribosomal protein bL17 family. As to quaternary structure, part of the 50S ribosomal subunit. Contacts protein L32.

This Onion yellows phytoplasma (strain OY-M) protein is Large ribosomal subunit protein bL17.